The sequence spans 309 residues: Postacrosomal sheath WW domain-binding protein (309 aa).

The region spanning 45–87 (GRKTGTLFLTSYRVIFITSCSISDPMLSFMMPFDLMTNLTVEQ) is the GRAM domain. 10 repeat units span residues 175-181 (YGAPPAG), 182-188 (YGAPPPG), 189-195 (YGAPPAG), 217-223 (YGAPPLG), 224-230 (YGAPPAG), 231-237 (YGAPPLG), 238-244 (YGAPPLG), 245-251 (YGTPPLG), 252-258 (YGAPPLG), and 259-265 (YGAPPAG). The interval 175 to 265 (YGAPPAGYGA…PLGYGAPPAG (91 aa)) is 10 X 7 AA tandem repeat of Y-G-X-P-P-X-G. Positions 186–189 (PPGY) match the PPxY motif motif. Residues 251-272 (GYGAPPLGYGAPPAGNEGPPAG) show a composition bias toward low complexity. The segment at 251 to 309 (GYGAPPLGYGAPPAGNEGPPAGYRASPAGSGARPQESTAAQAPENEASLPSASSSQVHS) is disordered. Residues 298–309 (SLPSASSSQVHS) show a composition bias toward polar residues.

In terms of tissue distribution, expressed in testis.

Functionally, may play a role in meiotic resumption and pronuclear formation, mediated by a WW domain-signaling pathway during fertilization. This is Postacrosomal sheath WW domain-binding protein (WBP2NL) from Homo sapiens (Human).